We begin with the raw amino-acid sequence, 103 residues long: Small ribosomal subunit protein uS10 (103 aa).

Belongs to the universal ribosomal protein uS10 family. In terms of assembly, part of the 30S ribosomal subunit.

Involved in the binding of tRNA to the ribosomes. This chain is Small ribosomal subunit protein uS10, found in Jannaschia sp. (strain CCS1).